We begin with the raw amino-acid sequence, 138 residues long: Small ribosomal subunit protein uS11c (138 aa).

The disordered stretch occupies residues 1-22; sequence MAKPILRVGSRKNTRSASRKNV. Over residues 9-22 the composition is skewed to basic residues; the sequence is GSRKNTRSASRKNV.

Belongs to the universal ribosomal protein uS11 family. As to quaternary structure, part of the 30S ribosomal subunit.

Its subcellular location is the plastid. The protein resides in the chloroplast. The polypeptide is Small ribosomal subunit protein uS11c (Draba nemorosa (Woodland whitlowgrass)).